We begin with the raw amino-acid sequence, 368 residues long: uncharacterized protein (368 aa).

This sequence belongs to the ornithine cyclodeaminase/mu-crystallin family.

This is an uncharacterized protein from Dictyostelium discoideum (Social amoeba).